A 305-amino-acid polypeptide reads, in one-letter code: Ribosomal RNA small subunit methyltransferase H (305 aa).

Residues 33 to 35 (GGY), aspartate 51, phenylalanine 78, aspartate 96, and glutamine 103 contribute to the S-adenosyl-L-methionine site.

It belongs to the methyltransferase superfamily. RsmH family.

The protein localises to the cytoplasm. The catalysed reaction is cytidine(1402) in 16S rRNA + S-adenosyl-L-methionine = N(4)-methylcytidine(1402) in 16S rRNA + S-adenosyl-L-homocysteine + H(+). Specifically methylates the N4 position of cytidine in position 1402 (C1402) of 16S rRNA. The protein is Ribosomal RNA small subunit methyltransferase H of Rickettsia bellii (strain RML369-C).